The primary structure comprises 415 residues: Beta-1,4-glucuronyltransferase 1 (415 aa).

Residues 1–8 (MQMSYAIR) are Cytoplasmic-facing. Residues 9-36 (CAFYQLLLAALMLVAMLQLLYLSLLSGL) traverse the membrane as a helical; Signal-anchor for type II membrane protein segment. Over 37-415 (HGQEEQEQYF…ARYPNSPHRC (379 aa)) the chain is Lumenal. Asn-204 carries N-linked (GlcNAc...) asparagine glycosylation. 2 residues coordinate Mn(2+): Asp-227 and Asp-229. Asn-300 carries N-linked (GlcNAc...) asparagine glycosylation.

The protein belongs to the glycosyltransferase 49 family. As to quaternary structure, interacts with LARGE1 and LARGE2. Mn(2+) is required as a cofactor.

The protein localises to the golgi apparatus membrane. It catalyses the reaction 3-O-[beta-D-Xyl-(1-&gt;4)-Rib-ol-P-Rib-ol-P-3-beta-D-GalNAc-(1-&gt;3)-beta-D-GlcNAc-(1-&gt;4)-(O-6-P-alpha-D-Man)]-Thr-[protein] + UDP-alpha-D-glucuronate = 3-O-[beta-D-GlcA-(1-&gt;3)-beta-D-Xyl-(1-&gt;4)-Rib-ol-P-Rib-ol-P-3-beta-D-GalNAc-(1-&gt;3)-beta-D-GlcNAc-(1-&gt;4)-(O-6-P-alpha-D-Man)]-Thr-[protein] + UDP + H(+). Its pathway is protein modification; protein glycosylation. Functionally, beta-1,4-glucuronyltransferase involved in O-mannosylation of alpha-dystroglycan (DAG1). Transfers a glucuronic acid (GlcA) residue onto a xylose (Xyl) acceptor to produce the glucuronyl-beta-1,4-xylose-beta disaccharide primer, which is further elongated by LARGE1, during synthesis of phosphorylated O-mannosyl glycan. Phosphorylated O-mannosyl glycan is a carbohydrate structure present in alpha-dystroglycan (DAG1), which is required for binding laminin G-like domain-containing extracellular proteins with high affinity. Required for axon guidance; via its function in O-mannosylation of alpha-dystroglycan (DAG1). This Mus musculus (Mouse) protein is Beta-1,4-glucuronyltransferase 1.